A 257-amino-acid polypeptide reads, in one-letter code: Gamma-secretase subunit APH-1B (257 aa).

The next 7 helical transmembrane spans lie at 5–25 (VFFG…VFTI), 32–52 (IIFL…SSLV), 71–91 (LLIF…FAYY), 115–135 (LLAY…SFVN), 158–178 (YSAF…IVFF), 186–206 (WGIL…TFIS), and 213–233 (LASA…AAGG).

This sequence belongs to the APH-1 family. As to quaternary structure, probable component of the gamma-secretase complex, a complex composed of a presenilin homodimer (PSEN1 or PSEN2), nicastrin (NCSTN), APH1 (APH1A or APH1B) and PEN2. Such minimal complex is sufficient for secretase activity, although other components may exist. Interacts with PSEN1 and PSEN2. As to expression, weakly or not expressed in leukocytes, lung, placenta, small intestine, liver, kidney, spleen thymus, colon, skeletal muscle, heart and brain.

It is found in the membrane. Its function is as follows. Probable subunit of the gamma-secretase complex, an endoprotease complex that catalyzes the intramembrane cleavage of integral proteins such as Notch receptors and APP (amyloid-beta precursor protein). It probably represents a stabilizing cofactor for the presenilin homodimer that promotes the formation of a stable complex. Probably present in a minority of gamma-secretase complexes compared to APH1A. The polypeptide is Gamma-secretase subunit APH-1B (APH1B) (Homo sapiens (Human)).